The sequence spans 107 residues: Small ribosomal subunit protein eS25 (107 aa).

Positions 1–35 are disordered; that stretch reads MPPKQQLSKAAKAAAAMAGGKKSKKKWSKKSHKDK. The segment covering 8 to 20 has biased composition (low complexity); sequence SKAAKAAAAMAGG. Residues 21–35 are compositionally biased toward basic residues; that stretch reads KKSKKKWSKKSHKDK.

This sequence belongs to the eukaryotic ribosomal protein eS25 family.

The polypeptide is Small ribosomal subunit protein eS25 (RPS25) (Candida glabrata (strain ATCC 2001 / BCRC 20586 / JCM 3761 / NBRC 0622 / NRRL Y-65 / CBS 138) (Yeast)).